Here is a 692-residue protein sequence, read N- to C-terminus: Elongation factor G (692 aa).

The tr-type G domain occupies 8–282 (ENTRNIGIMA…GVVDYLPSPL (275 aa)). Residues 17 to 24 (AHIDAGKT), 81 to 85 (DTPGH), and 135 to 138 (NKMD) each bind GTP.

It belongs to the TRAFAC class translation factor GTPase superfamily. Classic translation factor GTPase family. EF-G/EF-2 subfamily.

The protein localises to the cytoplasm. Functionally, catalyzes the GTP-dependent ribosomal translocation step during translation elongation. During this step, the ribosome changes from the pre-translocational (PRE) to the post-translocational (POST) state as the newly formed A-site-bound peptidyl-tRNA and P-site-bound deacylated tRNA move to the P and E sites, respectively. Catalyzes the coordinated movement of the two tRNA molecules, the mRNA and conformational changes in the ribosome. The polypeptide is Elongation factor G (Geobacillus thermodenitrificans (strain NG80-2)).